The sequence spans 416 residues: Phosphoglycerate kinase (416 aa).

The (2R)-3-phosphoglycerate site is built by V23, D24, F25, N26, Q38, R39, S62, H63, G65, R66, L121, R122, H168, and R169. Position 212 (G212) interacts with ADP. G212 lines the CDP pocket. 2 residues coordinate AMP: A213 and K214. Position 213 (A213) interacts with ATP. Residue A213 coordinates Mg(2+). D217 serves as a coordination point for CDP. Residue D217 coordinates Mg(2+). K218 contacts AMP. K218 contributes to the ATP binding site. G236 contacts ADP. Position 236 (G236) interacts with CDP. AMP-binding residues include G237 and G311. ATP is bound by residues G237 and G311. CDP contacts are provided by G336 and F341. ADP is bound at residue F341. E342 contributes to the AMP binding site. Positions 342, 373, and 374 each coordinate ATP. Mg(2+) is bound at residue D373.

Belongs to the phosphoglycerate kinase family. Monomer. The cofactor is Mg(2+).

Its subcellular location is the cytoplasm. It localises to the mitochondrion. It catalyses the reaction (2R)-3-phosphoglycerate + ATP = (2R)-3-phospho-glyceroyl phosphate + ADP. The protein operates within carbohydrate degradation; glycolysis; pyruvate from D-glyceraldehyde 3-phosphate: step 2/5. Functionally, catalyzes one of the two ATP producing reactions in the glycolytic pathway via the reversible conversion of 1,3-diphosphoglycerate to 3-phosphoglycerate. Both L- and D- forms of purine and pyrimidine nucleotides can be used as substrates, but the activity is much lower on pyrimidines. Negatively regulates the biosynthesis of acetyl-CoA from pyruvate in the mitochondrion. The sequence is that of Phosphoglycerate kinase (PGK1) from Komagataella pastoris (Yeast).